The chain runs to 405 residues: L-carnitine CoA-transferase (405 aa).

The CoA site is built by K97 and R104. D169 (nucleophile) is an active-site residue.

This sequence belongs to the CoA-transferase III family. CaiB subfamily. Homodimer.

It is found in the cytoplasm. The catalysed reaction is crotonobetainyl-CoA + (R)-carnitine = crotonobetaine + (R)-carnitinyl-CoA. It catalyses the reaction 4-(trimethylamino)butanoyl-CoA + (R)-carnitine = (R)-carnitinyl-CoA + 4-(trimethylamino)butanoate. It participates in amine and polyamine metabolism; carnitine metabolism. Its function is as follows. Catalyzes the reversible transfer of the CoA moiety from gamma-butyrobetainyl-CoA to L-carnitine to generate L-carnitinyl-CoA and gamma-butyrobetaine. Is also able to catalyze the reversible transfer of the CoA moiety from gamma-butyrobetainyl-CoA or L-carnitinyl-CoA to crotonobetaine to generate crotonobetainyl-CoA. The chain is L-carnitine CoA-transferase from Escherichia coli O17:K52:H18 (strain UMN026 / ExPEC).